Reading from the N-terminus, the 132-residue chain is MAITYSVGDMLTKLRNASRVKHGSVDLKMSNMNKSILNILKEEGYIKDFNFLEKEGIAFIKVLLKYDNKRNPVINKIDAISTPGRKIYSSYKNMPRIKNGYGILIISSSKGVITGKEAKNKKIGGELICSVW.

The protein belongs to the universal ribosomal protein uS8 family. As to quaternary structure, part of the 30S ribosomal subunit. Contacts proteins S5 and S12.

Functionally, one of the primary rRNA binding proteins, it binds directly to 16S rRNA central domain where it helps coordinate assembly of the platform of the 30S subunit. This is Small ribosomal subunit protein uS8 from Borrelia garinii subsp. bavariensis (strain ATCC BAA-2496 / DSM 23469 / PBi) (Borreliella bavariensis).